The following is a 188-amino-acid chain: MKLAIFGGTFDPIHAGHLAAAREASTRFALDRVLFIPAAHPPHKAGVTHAPYDDRVRMAELACRDDARFEVSRLEEGTARSYSIDTIEKVRAMLAPGDGLYFLIGADAFAEIRTWRRWTDVARAVRFLVVSRPGHTYEIPAEVTVDRIDSLEIPISSSEIRRTLAAGGIPEGLPPAVLAYARDHHLYN.

It belongs to the NadD family.

The catalysed reaction is nicotinate beta-D-ribonucleotide + ATP + H(+) = deamido-NAD(+) + diphosphate. Its pathway is cofactor biosynthesis; NAD(+) biosynthesis; deamido-NAD(+) from nicotinate D-ribonucleotide: step 1/1. In terms of biological role, catalyzes the reversible adenylation of nicotinate mononucleotide (NaMN) to nicotinic acid adenine dinucleotide (NaAD). This Solibacter usitatus (strain Ellin6076) protein is Probable nicotinate-nucleotide adenylyltransferase.